We begin with the raw amino-acid sequence, 359 residues long: Peptide chain release factor 1 (359 aa).

Glutamine 236 bears the N5-methylglutamine mark.

This sequence belongs to the prokaryotic/mitochondrial release factor family. In terms of processing, methylated by PrmC. Methylation increases the termination efficiency of RF1.

The protein localises to the cytoplasm. Functionally, peptide chain release factor 1 directs the termination of translation in response to the peptide chain termination codons UAG and UAA. This chain is Peptide chain release factor 1, found in Streptococcus pneumoniae (strain Taiwan19F-14).